A 403-amino-acid chain; its full sequence is Phosphoglycerate kinase (403 aa).

Substrate is bound by residues 21–23 (DFN), R37, 60–63 (HLGR), R125, and R158. Residues K209, E332, and 359-362 (GGDS) each bind ATP.

The protein belongs to the phosphoglycerate kinase family. As to quaternary structure, monomer.

The protein localises to the cytoplasm. It carries out the reaction (2R)-3-phosphoglycerate + ATP = (2R)-3-phospho-glyceroyl phosphate + ADP. Its pathway is carbohydrate degradation; glycolysis; pyruvate from D-glyceraldehyde 3-phosphate: step 2/5. The protein is Phosphoglycerate kinase of Koribacter versatilis (strain Ellin345).